We begin with the raw amino-acid sequence, 593 residues long: Cytochrome c oxidase polypeptide 1 (593 aa).

2 helical membrane-spanning segments follow: residues 5 to 25 and 71 to 91; these read ASSI…VAVL and IGIL…VSVL. Position 117 (histidine 117) interacts with Fe(II)-heme a. A run of 6 helical transmembrane segments spans residues 122–142, 154–174, 204–224, 246–266, 288–308, and 320–340; these read LFLF…PLLI, AIAF…FLIP, GLHL…ATIF, QSGL…MLLL, LFWF…MGIV, and LFGF…SFGV. Histidine 294 and tyrosine 298 together coordinate Cu cation. The segment at residues 294–298 is a cross-link (1'-histidyl-3'-tyrosine (His-Tyr)); sequence HPEVY. Residues histidine 343 and histidine 344 each coordinate Cu cation. Transmembrane regions (helical) follow at residues 358-378, 401-421, 425-445, 467-487, and 506-526; these read FMAV…NWIT, FIIG…LILH, YVVG…LFAA, FWTA…LGYG, and LATV…FNMA. Histidine 429 is a heme a3 binding site. Histidine 431 serves as a coordination point for Fe(II)-heme a. The segment at 562-593 is disordered; the sequence is TTVLPDGGDEAQSEADAVTDGGQPAADSDTES.

The protein belongs to the heme-copper respiratory oxidase family.

Its subcellular location is the cell membrane. It carries out the reaction 4 Fe(II)-[cytochrome c] + O2 + 8 H(+)(in) = 4 Fe(III)-[cytochrome c] + 2 H2O + 4 H(+)(out). It functions in the pathway energy metabolism; oxidative phosphorylation. Functionally, cytochrome c oxidase is the component of the respiratory chain that catalyzes the reduction of oxygen to water. Subunits 1-3 form the functional core of the enzyme complex. CO I is the catalytic subunit of the enzyme. Electrons originating in cytochrome c are transferred via the copper A center of subunit 2 and heme A of subunit 1 to the bimetallic center formed by heme A3 and copper B. The protein is Cytochrome c oxidase polypeptide 1 (coxA2) of Halobacterium salinarum (strain ATCC 700922 / JCM 11081 / NRC-1) (Halobacterium halobium).